The following is a 370-amino-acid chain: Homospermidine synthase 1 (370 aa).

It belongs to the deoxyhypusine synthase family. In terms of assembly, homotetramer. Requires NAD(+) as cofactor. Post-translationally, the N-terminus is blocked. As to expression, expressed in roots.

It carries out the reaction putrescine + spermidine = sym-homospermidine + propane-1,3-diamine. Its pathway is alkaloid biosynthesis; pyrrolizidine alkaloid biosynthesis. In terms of biological role, catalyzes the transfer of an aminobutyl unit from spermidine onto putrescine. The resulting polyamine homospermidine is a precursor in the biosynthesis of pyrrolizidine alkaloids. The polypeptide is Homospermidine synthase 1 (HSS1) (Senecio vernalis (Spring groundsel)).